The chain runs to 518 residues: Glutamate--cysteine ligase (518 aa).

Belongs to the glutamate--cysteine ligase type 1 family. Type 1 subfamily.

It catalyses the reaction L-cysteine + L-glutamate + ATP = gamma-L-glutamyl-L-cysteine + ADP + phosphate + H(+). It participates in sulfur metabolism; glutathione biosynthesis; glutathione from L-cysteine and L-glutamate: step 1/2. The sequence is that of Glutamate--cysteine ligase (gshA) from Buchnera aphidicola subsp. Acyrthosiphon pisum (strain APS) (Acyrthosiphon pisum symbiotic bacterium).